Consider the following 248-residue polypeptide: 3-deoxy-manno-octulosonate cytidylyltransferase (248 aa).

Belongs to the KdsB family.

Its subcellular location is the cytoplasm. The enzyme catalyses 3-deoxy-alpha-D-manno-oct-2-ulosonate + CTP = CMP-3-deoxy-beta-D-manno-octulosonate + diphosphate. It participates in nucleotide-sugar biosynthesis; CMP-3-deoxy-D-manno-octulosonate biosynthesis; CMP-3-deoxy-D-manno-octulosonate from 3-deoxy-D-manno-octulosonate and CTP: step 1/1. Its pathway is bacterial outer membrane biogenesis; lipopolysaccharide biosynthesis. Its function is as follows. Activates KDO (a required 8-carbon sugar) for incorporation into bacterial lipopolysaccharide in Gram-negative bacteria. The sequence is that of 3-deoxy-manno-octulosonate cytidylyltransferase from Shigella boydii serotype 18 (strain CDC 3083-94 / BS512).